A 964-amino-acid polypeptide reads, in one-letter code: MTSQVPCYTIINSPDLEVTNEMQLKRDLEKGDTNVKIETLKRVIKLLLNGERYPGLIMTIIRFVLPVQNHTIKKLLLIFWEIVPKTSADGKLLQEMILVCDAYRKDLQHPNEFLRGSTLRFLCKLKEPELLEPLMPAIRACLDHRHSYVRRNAVLAIFTIYKNFDWLVPDGPELIASFLDTQQDMSCKRNAFLMLLHADQERALNYLASCIDQVHTFGDILQLVIVELIYKVCHANPAERSRFIRCIYNLLNSSSNAVRYESAGTLITLSLAPTAIKAAASCYIELVVKESDNNVKLIVLDRLVAMKEHEGMEKVMQDLVMDVLRVLAAPDIEVRRKTLALALDLVYSRNIGEMVLVLKKEVAKTHNVEHEDTGKYRQLLVRTLHTCSIKFPDVAANVIPVLVEFLSDTNELAAADVLIFIREAIQKFPALRALIIEHLIEAFPQIKSSKIHRAAVWILGEYVEGSQILEVIAVIQQTLGEVPMVEAEQRRLAGDQTEEQKQQQGSAGGNAAGSAAEGSGSGNASNKVTSDGTYATQSAYSLAPVAKAEKRPPLRQYLMDGDFFIGAALSATLTKLALRYAELETEARAQNRLTTQVMLIMSSILHLGKSGFPSKPITNDDTDRIFVCLRTLSERTPEAISVFTLYCREALGKMLDAQHDEDQRMLKEKQKATAKVQPDDPVLFAQLSNGRDNQLGENVFESSLNQALAGSKNAQLSDVASPNSKLNKVTQLTGFSDPVYAEAYVNVNQYDIVLDVLIVNQTNDTLQNCTLELATLGDLKLVERPHPVVLAPHDFCNIKANVKVSSTENGIIFGNIVYETALNTNVVVLNTIHIDIMDYIIPASCTDTEFRQMWQDFEWENKVTVNTSFTDLHEYLKHLLKSTNMKCLTPEKALSGQCGFMAANMYAKSIFGENALANLSIEKPVDDPDSKVTGHIRIRAKSQGMALSLGDKISSSQKQSVQAA.

HEAT repeat units follow at residues 129 to 166 (ELLEPLMPAIRACLDHRHSYVRRNAVLAIFTIYKNFDW), 238 to 275 (AERSRFIRCIYNLLNSSSNAVRYESAGTLITLSLAPTA), 314 to 351 (KVMQDLVMDVLRVLAAPDIEVRRKTLALALDLVYSRNI), 393 to 430 (DVAANVIPVLVEFLSDTNELAAADVLIFIREAIQKFPA), and 466 to 506 (SQIL…QQGS). The span at 490-501 (RRLAGDQTEEQK) shows a compositional bias: basic and acidic residues. Positions 490–530 (RRLAGDQTEEQKQQQGSAGGNAAGSAAEGSGSGNASNKVTS) are disordered. Over residues 512 to 526 (AGSAAEGSGSGNASN) the composition is skewed to low complexity.

Oligomeric complex that consists of at least the alpha, beta, beta', gamma, delta, epsilon and zeta subunits. During oogenesis and spermatogenesis, expressed in ovariole, germarium, testis tip and testis.

It localises to the cytoplasm. The protein localises to the golgi apparatus membrane. Its subcellular location is the cytoplasmic vesicle. It is found in the COPI-coated vesicle membrane. Functionally, the coatomer is a cytosolic protein complex that binds to dilysine motifs and reversibly associates with Golgi non-clathrin-coated vesicles, which further mediate biosynthetic protein transport from the ER, via the Golgi up to the trans Golgi network. Coatomer complex is required for budding from Golgi membranes, and is essential for the retrograde Golgi-to-ER transport of dilysine-tagged proteins. Required for limiting lipid storage in lipid droplets. The sequence is that of Coatomer subunit beta from Drosophila melanogaster (Fruit fly).